Reading from the N-terminus, the 950-residue chain is General transcription factor II-I repeat domain-containing protein 2 (950 aa).

GTF2I-like repeat units lie at residues 100–194 (QVDS…QPGG) and 324–418 (LSSL…SNVG).

It belongs to the TFII-I family.

It is found in the nucleus. The sequence is that of General transcription factor II-I repeat domain-containing protein 2 (GTF2IRD2) from Bos taurus (Bovine).